The primary structure comprises 566 residues: Proline--tRNA ligase 1 (566 aa).

It belongs to the class-II aminoacyl-tRNA synthetase family. ProS type 1 subfamily. In terms of assembly, homodimer.

It is found in the cytoplasm. It carries out the reaction tRNA(Pro) + L-proline + ATP = L-prolyl-tRNA(Pro) + AMP + diphosphate. Its function is as follows. Catalyzes the attachment of proline to tRNA(Pro) in a two-step reaction: proline is first activated by ATP to form Pro-AMP and then transferred to the acceptor end of tRNA(Pro). As ProRS can inadvertently accommodate and process non-cognate amino acids such as alanine and cysteine, to avoid such errors it has two additional distinct editing activities against alanine. One activity is designated as 'pretransfer' editing and involves the tRNA(Pro)-independent hydrolysis of activated Ala-AMP. The other activity is designated 'posttransfer' editing and involves deacylation of mischarged Ala-tRNA(Pro). The misacylated Cys-tRNA(Pro) is not edited by ProRS. This is Proline--tRNA ligase 1 from Bacillus thuringiensis subsp. konkukian (strain 97-27).